We begin with the raw amino-acid sequence, 349 residues long: sn-glycerol-3-phosphate import ATP-binding protein UgpC (349 aa).

The 231-residue stretch at 4-234 (ISLRDVRKSY…PATTFVAGFI (231 aa)) folds into the ABC transporter domain. Residue 36–43 (GPSGCGKS) coordinates ATP.

It belongs to the ABC transporter superfamily. sn-glycerol-3-phosphate importer (TC 3.A.1.1.3) family. As to quaternary structure, the complex is composed of two ATP-binding proteins (UgpC), two transmembrane proteins (UgpA and UgpE) and a solute-binding protein (UgpB).

It localises to the cell inner membrane. The enzyme catalyses sn-glycerol 3-phosphate(out) + ATP + H2O = sn-glycerol 3-phosphate(in) + ADP + phosphate + H(+). Part of the ABC transporter complex UgpBAEC involved in sn-glycerol-3-phosphate (G3P) import. Responsible for energy coupling to the transport system. The protein is sn-glycerol-3-phosphate import ATP-binding protein UgpC of Cereibacter sphaeroides (strain ATCC 17023 / DSM 158 / JCM 6121 / CCUG 31486 / LMG 2827 / NBRC 12203 / NCIMB 8253 / ATH 2.4.1.) (Rhodobacter sphaeroides).